The sequence spans 309 residues: MSKKIAVIGECMIELSEKGADVKRGFGGDTLNTSVYIARQVDPAALTVHYVTALGTDSFSQQMLDAWHGENVDTSLTQRMENRLPGLYYIETDSTGERTFYYWRNEAAAKFWLESEQSAAICEELANFDYLYLSGISLAILSPTSREKLLSLLRECRANGGKVIFDNNYRPRLWASKEETQQVYQQMLECTDIAFLTLDDEDALWGQQPVEDVIARTHNAGVKEVVVKRGADSCLVSIAGEGLVDVPAVKLPKEKVIDTTAAGDSFSAGYLAVRLTGGSAEDAAKRGHLTASTVIQYRGAIIPREAMPA.

Substrate is bound by residues 28-32 (GDTLN), tyrosine 88, 102-104 (YWR), and arginine 170. ATP-binding positions include 168–170 (NYR), 228–233 (KRGADS), and 261–264 (AAGD). Aspartate 264 provides a ligand contact to substrate. The active-site Proton acceptor is aspartate 264.

It belongs to the carbohydrate kinase PfkB family.

It carries out the reaction 2-dehydro-3-deoxy-D-gluconate + ATP = 2-dehydro-3-deoxy-6-phospho-D-gluconate + ADP + H(+). Its pathway is carbohydrate acid metabolism; 2-dehydro-3-deoxy-D-gluconate degradation; D-glyceraldehyde 3-phosphate and pyruvate from 2-dehydro-3-deoxy-D-gluconate: step 1/2. Its function is as follows. Catalyzes the phosphorylation of 2-keto-3-deoxygluconate (KDG) to produce 2-keto-3-deoxy-6-phosphogluconate (KDPG). The chain is 2-dehydro-3-deoxygluconokinase (kdgK) from Escherichia coli (strain K12).